The chain runs to 177 residues: Large ribosomal subunit protein uL6 (177 aa).

It belongs to the universal ribosomal protein uL6 family. Part of the 50S ribosomal subunit.

In terms of biological role, this protein binds to the 23S rRNA, and is important in its secondary structure. It is located near the subunit interface in the base of the L7/L12 stalk, and near the tRNA binding site of the peptidyltransferase center. This Shewanella frigidimarina (strain NCIMB 400) protein is Large ribosomal subunit protein uL6.